Here is a 310-residue protein sequence, read N- to C-terminus: MATENASVPEFILAGLTDQPGLRMPLFFLFLGFYMVTMVGNLGLITLIGLNSHLHTPMYFFLFNLSLIDFCYSTVITPKMLVSFVSKKNIISYSGCMTQLFFFLFFVVSESFILSAMAYDRYVAICNPLMYTVTMSPQVCLLLLLGVYVMGFAGAMAHTAFMVKLTFCADKLVNHYMCDILPLLERSCTSTYVNELVVFIVVGIDIGVPTVTIFISYALILSSILRISSTEGRSKAFSTCSSHIIAVSLFFGSGAFMYLKPSSLLPMNQGKVSSLFYTIVVPMLNPLIYSLRNKDVKVALRKTLSRSSFS.

The Extracellular portion of the chain corresponds to M1–F27. N5 carries N-linked (GlcNAc...) asparagine glycosylation. Residues F28–I48 traverse the membrane as a helical segment. At G49–H55 the chain is on the cytoplasmic side. Residues T56–I76 form a helical membrane-spanning segment. At T77 to T98 the chain is on the extracellular side. An intrachain disulfide couples C96 to C188. The helical transmembrane segment at Q99–Y119 threads the bilayer. Residues D120–C140 are Cytoplasmic-facing. Residues L141–F161 traverse the membrane as a helical segment. Over M162–E195 the chain is Extracellular. Residues L196 to S216 form a helical membrane-spanning segment. Residues Y217 to S238 lie on the Cytoplasmic side of the membrane. The helical transmembrane segment at T239–L259 threads the bilayer. Over K260–G270 the chain is Extracellular. A helical membrane pass occupies residues K271–L291. Residues R292–S310 are Cytoplasmic-facing.

This sequence belongs to the G-protein coupled receptor 1 family.

It localises to the cell membrane. Odorant receptor. In Mus musculus (Mouse), this protein is Olfactory receptor 8B8.